Reading from the N-terminus, the 95-residue chain is Small ribosomal subunit protein bS6 (95 aa).

Belongs to the bacterial ribosomal protein bS6 family.

Functionally, binds together with bS18 to 16S ribosomal RNA. The protein is Small ribosomal subunit protein bS6 of Nocardia farcinica (strain IFM 10152).